Here is a 68-residue protein sequence, read N- to C-terminus: Peptide TsPep3 (68 aa).

A signal peptide spans 1-26; that stretch reads MKLSCGFLLIFLVLSAMIATFSEVEA. 4 disulfide bridges follow: C30–C38, C33–C54, C37–C47, and C42–C52. Residues 56–68 constitute a propeptide that is removed on maturation; the sequence is GRSDLNEEFENYQ.

As to expression, expressed by the venom gland.

The protein resides in the secreted. Functionally, probable weak potassium channel blocker. The protein is Peptide TsPep3 of Tityus serrulatus (Brazilian scorpion).